The following is a 126-amino-acid chain: Large ribosomal subunit protein uL22 (126 aa).

Belongs to the universal ribosomal protein uL22 family. Part of the 50S ribosomal subunit.

Functionally, this protein binds specifically to 23S rRNA; its binding is stimulated by other ribosomal proteins, e.g. L4, L17, and L20. It is important during the early stages of 50S assembly. It makes multiple contacts with different domains of the 23S rRNA in the assembled 50S subunit and ribosome. Its function is as follows. The globular domain of the protein is located near the polypeptide exit tunnel on the outside of the subunit, while an extended beta-hairpin is found that lines the wall of the exit tunnel in the center of the 70S ribosome. This Paracoccus denitrificans (strain Pd 1222) protein is Large ribosomal subunit protein uL22.